The primary structure comprises 324 residues: Glyoxylate/hydroxypyruvate reductase B (324 aa).

Active-site residues include arginine 237 and glutamate 266. Histidine 285 acts as the Proton donor in catalysis.

Belongs to the D-isomer specific 2-hydroxyacid dehydrogenase family. GhrB subfamily. In terms of assembly, homodimer.

The protein localises to the cytoplasm. The catalysed reaction is glycolate + NADP(+) = glyoxylate + NADPH + H(+). The enzyme catalyses (R)-glycerate + NAD(+) = 3-hydroxypyruvate + NADH + H(+). It carries out the reaction (R)-glycerate + NADP(+) = 3-hydroxypyruvate + NADPH + H(+). Catalyzes the NADPH-dependent reduction of glyoxylate and hydroxypyruvate into glycolate and glycerate, respectively. The chain is Glyoxylate/hydroxypyruvate reductase B from Enterobacter sp. (strain 638).